Reading from the N-terminus, the 298-residue chain is Protoheme IX farnesyltransferase (298 aa).

The next 8 membrane-spanning stretches (helical) occupy residues 24–44, 46–66, 97–117, 118–138, 146–166, 172–192, 231–251, and 278–298; these read VVSL…PAWP, WTTI…AAAF, LVFA…VVNP, LTMW…TVLL, IVIG…AATG, ALLL…ALAL, LLPV…VLLG, and IWYL…PIPV.

Belongs to the UbiA prenyltransferase family. Protoheme IX farnesyltransferase subfamily.

Its subcellular location is the cell inner membrane. It catalyses the reaction heme b + (2E,6E)-farnesyl diphosphate + H2O = Fe(II)-heme o + diphosphate. Its pathway is porphyrin-containing compound metabolism; heme O biosynthesis; heme O from protoheme: step 1/1. Functionally, converts heme B (protoheme IX) to heme O by substitution of the vinyl group on carbon 2 of heme B porphyrin ring with a hydroxyethyl farnesyl side group. The sequence is that of Protoheme IX farnesyltransferase from Thiobacillus denitrificans (strain ATCC 25259 / T1).